The following is a 1078-amino-acid chain: Zinc finger protein 827 (1078 aa).

Basic and acidic residues predominate over residues 1-10; it reads MPRRKQEQPK. The interval 1–14 is mediates direct interaction with RBBP4; sequence MPRRKQEQPKRLPS. Residues 1-76 form a disordered region; that stretch reads MPRRKQEQPK…PDTSLGSATP (76 aa). The short motif at 3–5 is the RRK motif; mediates NuRD recruitment to telomeres element; the sequence is RRK. Polar residues-rich tracts occupy residues 33–42 and 62–76; these read YGNSSETPSE and EQSTSPDTSLGSATP. Residues lysine 175, lysine 215, and lysine 225 each participate in a glycyl lysine isopeptide (Lys-Gly) (interchain with G-Cter in SUMO2) cross-link. The interval 307 to 341 is disordered; sequence SLLPDDPLPLPSSEKKPEKVTPPPPPPPPTAQPPQ. Over residues 326-338 the composition is skewed to pro residues; that stretch reads VTPPPPPPPPTAQ. Glycyl lysine isopeptide (Lys-Gly) (interchain with G-Cter in SUMO2) cross-links involve residues lysine 357 and lysine 369. C2H2-type zinc fingers lie at residues 371–393, 399–421, and 430–452; these read FQCPICGLVIKRKSYWKRHMVIH, HQCPLCPFRCARKDNLKSHMKVH, and FQCQLCPFTSSRHFSLKLHMRCH. Glycyl lysine isopeptide (Lys-Gly) (interchain with G-Cter in SUMO2) cross-links involve residues lysine 463, lysine 472, lysine 520, lysine 546, lysine 577, lysine 584, and lysine 594. Residues 466 to 490 are disordered; the sequence is IPDPDVKGSPHLSDSGCLGQQREGG. Positions 594 to 640 are disordered; the sequence is KEEPKEEESLSMPLPRSSYVFSPEPEVSTPSVSEDPLTPQEGKGSVL. Residues 613–627 are compositionally biased toward low complexity; sequence VFSPEPEVSTPSVSE. Glycyl lysine isopeptide (Lys-Gly) (interchain with G-Cter in SUMO2) cross-links involve residues lysine 636 and lysine 655. A Glycyl lysine isopeptide (Lys-Gly) (interchain with G-Cter in SUMO1); alternate cross-link involves residue lysine 670. Lysine 670 participates in a covalent cross-link: Glycyl lysine isopeptide (Lys-Gly) (interchain with G-Cter in SUMO2); alternate. Glycyl lysine isopeptide (Lys-Gly) (interchain with G-Cter in SUMO2) cross-links involve residues lysine 701, lysine 707, lysine 739, lysine 775, and lysine 795. 2 C2H2-type zinc fingers span residues 814-836 and 842-864; these read FPCDVCGKVFGRQQTLSRHLSLH and YKCHLCPYAAKCRANLNQHLTVH. Glycyl lysine isopeptide (Lys-Gly) (interchain with G-Cter in SUMO2) cross-links involve residues lysine 867 and lysine 888. 2 consecutive C2H2-type zinc fingers follow at residues 894–916 and 926–949; these read YSCHVCGFETELNVQFVSHMSLH and ICCTACDFVTMEEAEIKTHIGTKH. A compositionally biased stretch (basic and acidic residues) spans 945–957; it reads IGTKHTGDDRKTP. Positions 945–990 are disordered; sequence IGTKHTGDDRKTPSESNSPSSSSLSTLSDSANGKDDSDSSQKNKGG. Residue lysine 955 forms a Glycyl lysine isopeptide (Lys-Gly) (interchain with G-Cter in SUMO2) linkage. A compositionally biased stretch (low complexity) spans 958 to 974; that stretch reads SESNSPSSSSLSTLSDS. Residues 976 to 985 show a composition bias toward basic and acidic residues; sequence NGKDDSDSSQ. Residue lysine 1011 forms a Glycyl lysine isopeptide (Lys-Gly) (interchain with G-Cter in SUMO2) linkage. C2H2-type zinc fingers lie at residues 1016 to 1038 and 1044 to 1066; these read FECVFCNFVCKTKNMFERHLQIH and FECDVCHKFMKTPEQLLEHKKCH.

It belongs to the krueppel C2H2-type zinc-finger protein family. As to quaternary structure, part of a transcription inhibitory ribonucleoprotein complex composed at least of the circular RNA circZNF827, HNRNPK and HNRNPL. Interacts with the nucleosome remodeling and histone deacetylase/NuRD complex. Interacts with RBBP4; the interaction is direct and recruits RBBP4, a component of the NuRD complex, to telomeres.

It localises to the nucleus. It is found in the chromosome. Its subcellular location is the telomere. Functionally, as part of a ribonucleoprotein complex composed at least of HNRNPK, HNRNPL and the circular RNA circZNF827 that nucleates the complex on chromatin, may negatively regulate the transcription of genes involved in neuronal differentiation. Could also recruit the nucleosome remodeling and histone deacetylase/NuRD complex to telomeric regions of chromosomes to regulate chromatin remodeling as part of telomere maintenance. This chain is Zinc finger protein 827 (Znf827), found in Mus musculus (Mouse).